The primary structure comprises 347 residues: NADH-ubiquinone oxidoreductase chain 2 (347 aa).

Transmembrane regions (helical) follow at residues 1-21, 25-45, 59-79, 96-116, 123-143, 153-173, 178-198, 200-220, 239-259, 278-298, and 325-345; these read MNPLVTLIIYITLISGTIITM, HWLTVWMGLEMNMFAIIPLIM, YFLIQASASMLLLMAATINFM, TIILAAIMMKLGMAPFHFWVP, LLSTSLIILTWQKLAPLSILY, IILASAMLSIMIGGWGGLNQT, IMAYSSIAHMGWMSAILIYNP, LMLLNLTLYIIFTITMFTILI, ILMMTLLLTLLSMGGLPPLSG, ISLTMAMLALLNLYFYMRLIY, and FLPTLTIISILMLPITPMMFI.

This sequence belongs to the complex I subunit 2 family. Core subunit of respiratory chain NADH dehydrogenase (Complex I) which is composed of 45 different subunits. Interacts with TMEM242.

It localises to the mitochondrion inner membrane. The catalysed reaction is a ubiquinone + NADH + 5 H(+)(in) = a ubiquinol + NAD(+) + 4 H(+)(out). In terms of biological role, core subunit of the mitochondrial membrane respiratory chain NADH dehydrogenase (Complex I) that is believed to belong to the minimal assembly required for catalysis. Complex I functions in the transfer of electrons from NADH to the respiratory chain. The immediate electron acceptor for the enzyme is believed to be ubiquinone. This Oryzorictes hova (Hova rice tenrec) protein is NADH-ubiquinone oxidoreductase chain 2.